The sequence spans 917 residues: Smoothelin (917 aa).

Ala-2 is modified (N-acetylalanine). The stretch at 24 to 89 forms a coiled coil; that stretch reads LAERRRIRSA…ARLAGQLESM (66 aa). The interval 157 to 456 is disordered; the sequence is EVPEREEQEQ…AVGTAEPGGS (300 aa). Residues 177–188 are compositionally biased toward polar residues; it reads PEGTSQDVTTVT. Composition is skewed to low complexity over residues 193-210 and 220-232; these read APPGSTSSSPASPSSSPT and PAEAQCLTAEVPG. The segment covering 233–243 has biased composition (pro residues); the sequence is SPEPPPSPPKT. Positions 244-258 are enriched in low complexity; it reads TSPEPQESPTLPSTE. A compositionally biased stretch (polar residues) spans 298 to 326; that stretch reads RSLSVLSPRQPAQNRESTPLASGPSSFQR. A phosphoserine mark is found at Ser-299, Ser-301, and Ser-304. A compositionally biased stretch (basic and acidic residues) spans 329–338; sequence SVRDRVHKFT. Residue Ser-341 is modified to Phosphoserine. Phosphothreonine is present on Thr-351. Ser-357 carries the phosphoserine modification. Phosphothreonine is present on residues Thr-360 and Thr-373. The segment covering 363 to 392 has biased composition (low complexity); it reads RLLGPSLTSTTPASSSSGSSSRGPSDTSSR. Phosphoserine is present on residues Ser-503, Ser-514, Ser-523, and Ser-576. Disordered stretches follow at residues 560-580 and 617-767; these read ANGAEQTRVNKAPEGRSPLSA and QRKR…RKAM. Residues 603–630 are a coiled coil; the sequence is EERKLIRAALRELRQRKRDQRDKERERR. Basic and acidic residues predominate over residues 617–640; sequence QRKRDQRDKERERRLQEARGRPGE. Residues 676–689 show a composition bias toward polar residues; it reads NDGTRTARTTTVES. Low complexity predominate over residues 701 to 720; it reads STMMQTKTFSSSSSSKKMGS. Ser-729 carries the post-translational modification Phosphoserine. A compositionally biased stretch (basic and acidic residues) spans 738 to 750; it reads LEKRQAEKKKELM. The residue at position 792 (Ser-792) is a Phosphoserine. In terms of domain architecture, Calponin-homology (CH) spans 799–906; sequence NSIKQMLLDW…YVQSLYNHLR (108 aa).

The protein belongs to the smoothelin family. As to expression, smooth muscle; contractile or vascular (for the long form).

It localises to the cytoplasm. The protein localises to the cytoskeleton. In terms of biological role, structural protein of the cytoskeleton. The chain is Smoothelin (SMTN) from Homo sapiens (Human).